A 503-amino-acid polypeptide reads, in one-letter code: Pentatricopeptide repeat-containing protein At2g30100, chloroplastic (503 aa).

The N-terminal 50 residues, 1–50 (MAYAHVFASLTISTISLRRFLPRLHRNHSVKPNSRIICNLKLNYSAGKFR), are a transit peptide targeting the chloroplast. 3 PPR repeats span residues 341 to 375 (IGVV…GREP), 376 to 410 (EADL…GSQR), and 411 to 445 (KKKT…GLHP).

This sequence belongs to the PPR family. P subfamily.

The protein localises to the plastid. It localises to the chloroplast. The sequence is that of Pentatricopeptide repeat-containing protein At2g30100, chloroplastic from Arabidopsis thaliana (Mouse-ear cress).